The sequence spans 3063 residues: MATYMSTICFGSFECKLPYSPASCEHIVKEREVPASVDPFADLETQLSARLLKQKYATVRVLKNGTFTYRYKTDAQIMRIQKKLERKDREEYHFQMAAPSIVSKITIAGGDPPSKSEPQAPRGIIHTTPRMRKVKTRPIIKLTEGQMNHLIKQIKQIMSEKRGSVHLISKKTTHVQYKKILGAYSAAVRTAHMMGLRRRVDFRCDMWTVGLLQRLARTDKWSNQVRTINIRRGDSGVILNTKSLKGHFGRSSGGLFIVRGSHEGKLYDARSRVTQSILNSMIQFSNADNFWKGLDGNWARMRYPSDHTCVAGLPVEDCGRVAALMAHSILPCYKITCPTCAQQYASLPVSDLFKLLHKHARDGLNRLGADKDRFIHVNKFLIALEHLTEPVDLNLELFNEIFKSIGEKQQAPFKNLNVLNNFFLKGKENTAHEWQVAQLSLLELARFQKNRTDNIKKGDISFFRNKLSAKANWNLYLSCDNQLDKNANFLWGQREYHAKRFFSNFFEEIDPAKGYSAYEIRKHPSGTRKLSIGNLVVPLDLAEFRQKMKGDYRKQPGVSKKCTSSKDGNYVYPCCCTTLDDGSAIESTFYPPTKKHLVIGNSGDQKFVDLPKGDSEMLYIAKQGYCYINVFLAMLINISEEDAKDFTKKVRDMCVPKLGTWPTMMDLATTCAQMRIFYPDVHDAELPRILVDHDTQTCHVVDSFGSQTTGYHILKASSVSQLILFANDELESDIKHYRVGGVPNASPELGSTISPFREGGVIMSESAALKLLLKGIFRPKVMRQLLLDEPYLLILSILSPGILMAMYNNGIFELAVRLWINEKQSIAMIASLLSALALRVSAAETLVAQRIIIDAAATDLLDATCDGFNLHLTYPTALMVLQVVKNRNECDDTLFKAGFPSYNTSVVQIMEKNYLNLLNDAWKDLTWRENYPQHGTHTEQNALSTRYIKPTEKADLKGLYNISPQAFLGRSAQVVKGTASGLSERFNNYFNTKCVNISSFFIRRIFRRLPTFVTFVNSLLVISMLTSVVAVCQAIILDQRKYRREIELMQIEKNEIVCMELYASLQRKLERDFTWDEYIEYLKSVNPQIVQFAQAQMEEYDVRHQRSTPVVKNLEQVVAFMALVIMVFDAERSDCVFKTLNKFKGVLSSLDYEVRHQSLDDVIKNFDERNEIIDFELSEDTIRTSSVLDTKFSDWWDRQIQMGHTLPHYRTEGHFMEFTRATAVQVANDIAHSEHLDFLVRGAVGSGKSTGLPVHLSVAGSVLLIEPTRPLAENVFKQLSSEPFFKKPTLRMRGNSIFGSSPISVMTSGFALHYFANNRSQLAQFNFVIFDECHVLDPSAMAFRSLLSVYHQACKVLKVSATPVGREVEFTTQQPVKLIVEDTVSFQSFVDAQGSKTNADVVQFGSNVLVYVSSYNEVDTLAKLLTDKNMMVTKVDGRTMKHGCLEIVTKGTSARPHFVVATNIIENGVTLDIDVVVDFGLKVSPFLDIDNRSIAYNKVSVSYGERIQRLGRVGRFKKGVALRIGHTEKGIIEIPSMVATEAALACFAYNLPVMTGGVSTSLIGNCTVRQVKTMQQFELSPFFIQNFVAHDGSMHPVIHDILKKYKLRDCMTPLCDQSIPYRASSTWLSVSEYERLGVALEIPKQVKIAFHIKEIPPKLHEMLWETVVKYKDVCLFPSIRASSISKIAYTLRTDLFAIPRTLILVERLLEEERVKQSQFRSLIDEGCSSMFSIVNLTNTLRARYAKDYTAENIQKLEKVRSQLKEFSNLDGSACEENLIKRYESLQFVHHQAATSLAKDLKLKGIWNKSLVAKDLIIAGAVAIGGIGLIYSWFTQSVETVSHQGKNKSKRIQALKFRHARDKRAGFEIDNNDDTIEEFFGSAYRKKGKGKGTTVGMGKSSRRFINMYGFDPTEYSFIQFVDPLTGRQIEENVYADIRDIQERFSEVRKKMVENDDIEMQALGSNTTIHAYFRKDWCDKALKIDLMPHNPLKVCDKTNGIAKFPERELELRQTGPAVEVDVKDIPAQEVEHEAKSLMRGLRDFNPIAQTVCRLKVSVEYGASEMYGFGFGAYIVANHHLFRSYNGSMEVQSMHGTFRVKNLHSLSVLPIKGRDIILIKMPKDFPVFPQKLHFRAPTQNERICLVGTNFQEKYASSIITETSTTYNIPGSTFWKHWIETDNGHCGLPVVSTADGCIVGIHSLANNAHTTNYYSAFDEDFESKYLRTNEHNEWVKSWVYNPDTVLWGPLKLKDSTPKGLFKTTKLVQDLIDHDVVVEQAKHSAWMFEALTGNLQAVATMKSQLVTKHVVKGECRHFTEFLTVDAEAEAEAFFRPLMDAYGKSLLNRDAYIKDIMKYSKPIDVGVVDRMHLRKPSIGLSSTCNVHGFKKCAYVTDEQEIFKALNMKAAVGASYGCKKKDYFEHFTDADKEEIVMQSCLRLYKGLLGIWNGSLKAELRCKEKILANKTRTFTAAPLDTLLGGKVCVDDFNNQFYSKNIECCWTVGMTKFYGGWDKLLRRLPENWVYCDADGSQFDSSLTPYLINAVLTIRSTYMEDWDVGLQMLRNLYTEIVYTPISTPDGTIVKKFRGNNSGQPSTVVDNSLMVVLAMHYALIKECVEFEEIDSTCVFFVNGDDLLIAVNPEKESILDRMSQHFSDLGLNYDFSSRTRRKEELWFMSHRGLLIEGMYVPKLEEERIVSILQWDRADLPEHRLEAICAAMIESWGYSELTHQIRRFYSWLLQQQPFATIAQEGKAPYIASMALRKLYMDRAVDEEELRAFTEMMVALDDEFELDSYEVHHQANDTIDAGGSNKKDAKPEQGSIQPNPNKGKDKDVNAGTSGTHTVPRIKAITSKMRMPTSKGATVPNLEHLLEYAPQQIDISNTRATQSQFDTWYEAVRMAYDIGETEMPTVMNGLMVWCIENGTSPNVNGVWVMMDGNEQVEYPLKPIVENAKPTLRQIMAHFSDVAEAYIEMRNKKEPYMPRYGLIRNLRDMGLARYAFDFYEVTSRTPVRAREAHIQMKAAALKSAQPRLFGLDGGISTQEENTERHTTEDVSPSMHTLLGVKNM.

The Peptidase S30 domain maps to 141–284 (KLTEGQMNHL…QSILNSMIQF (144 aa)). Catalysis depends on for P1 proteinase activity residues His-192, Asp-201, and Ser-235. The Involved in interaction with stylet and aphid transmission motif lies at 334 to 337 (KITC). The short motif at 592–594 (PTK) is the Involved in virions binding and aphid transmission element. Residues 618-740 (LYIAKQGYCY…ESDIKHYRVG (123 aa)) enclose the Peptidase C6 domain. Active-site for helper component proteinase activity residues include Cys-626 and His-699. The 153-residue stretch at 1229–1381 (DIAHSEHLDF…TQQPVKLIVE (153 aa)) folds into the Helicase ATP-binding domain. 1242–1249 (GAVGSGKS) is an ATP binding site. The short motif at 1331–1334 (DECH) is the DECH box element. The region spanning 1400 to 1559 (DVVQFGSNVL…NLPVMTGGVS (160 aa)) is the Helicase C-terminal domain. Residues 1884 to 1892 (RKKGKGKGT) carry the Nuclear localization signal motif. At Tyr-1907 the chain carries O-(5'-phospho-RNA)-tyrosine. The tract at residues 1949–1964 (KMVENDDIEMQALGSN) is interaction with host EIF4E. A Peptidase C4 domain is found at 2032-2250 (AKSLMRGLRD…VLWGPLKLKD (219 aa)). Active-site for nuclear inclusion protein A activity residues include His-2077, Asp-2112, and Cys-2182. One can recognise a RdRp catalytic domain in the interval 2519 to 2643 (WVYCDADGSQ…AVNPEKESIL (125 aa)). The disordered stretch occupies residues 2798–2841 (NDTIDAGGSNKKDAKPEQGSIQPNPNKGKDKDVNAGTSGTHTVP). Residue Thr-3046 is modified to Phosphothreonine.

This sequence belongs to the potyviridae genome polyprotein family. Interacts with host eIF4E protein (via cap-binding region); this interaction mediates the translation of the VPg-viral RNA conjugates. Part of a complex that comprises VPg, RNA, host EIF4E and EIF4G; this interaction mediates the translation of the VPg-viral RNA conjugates. Interaction is possible in susceptible hosts but impaired in resistant plants: the VPg of strain LYE84 interacts with tomato eIF4E1 and eIF4E2 as well as with the Capsicum annuum eIF4E1 susceptible allele pvr2(+) but not with resistant alleles pvr2(1), pvr2(2), pvr2(3), pvr2(4), pvr2(5), pvr2(6), pvr2(7), pvr2(8) and pvr2(9), the VPg of strain SON41 interacts with C.annuum eIF4E1 susceptible alleles pvr2(+), pvr2(1), pvr2(2), pvr2(3) and pvr2(4) but not with resistant alleles pvr2(5), pvr2(6), pvr2(7), pvr2(8) and pvr2(9), the VPg of strain LYE90 interacts only with tomato eIF4E1. In terms of processing, VPg is uridylylated by the polymerase and is covalently attached to the 5'-end of the genomic RNA. This uridylylated form acts as a nucleotide-peptide primer for the polymerase. Post-translationally, potyviral RNA is expressed as two polyproteins which undergo post-translational proteolytic processing. Genome polyprotein is processed by NIa-pro, P1 and HC-pro proteinases resulting in the production of at least ten individual proteins. P3N-PIPO polyprotein is cleaved by P1 and HC-pro proteinases resulting in the production of three individual proteins. The P1 proteinase and the HC-pro cleave only their respective C-termini autocatalytically. 6K1 is essential for proper proteolytic separation of P3 from CI.

Its subcellular location is the host cytoplasmic vesicle. The protein resides in the host nucleus. It localises to the virion. The enzyme catalyses RNA(n) + a ribonucleoside 5'-triphosphate = RNA(n+1) + diphosphate. It carries out the reaction Hydrolyzes glutaminyl bonds, and activity is further restricted by preferences for the amino acids in P6 - P1' that vary with the species of potyvirus, e.g. Glu-Xaa-Xaa-Tyr-Xaa-Gln-|-(Ser or Gly) for the enzyme from tobacco etch virus. The natural substrate is the viral polyprotein, but other proteins and oligopeptides containing the appropriate consensus sequence are also cleaved.. The catalysed reaction is Hydrolyzes a Gly-|-Gly bond at its own C-terminus, commonly in the sequence -Tyr-Xaa-Val-Gly-|-Gly, in the processing of the potyviral polyprotein.. Required for aphid transmission and also has proteolytic activity. Only cleaves a Gly-Gly dipeptide at its own C-terminus. Interacts with virions and aphid stylets. Acts as a suppressor of RNA-mediated gene silencing, also known as post-transcriptional gene silencing (PTGS), a mechanism of plant viral defense that limits the accumulation of viral RNAs. May have RNA-binding activity. Functionally, has helicase activity. It may be involved in replication. Its function is as follows. Indispensable for virus replication. Reduces the abundance of host transcripts related to jasmonic acid biosynthesis therefore altering the host defenses. In order to increase its own stability, decreases host protein degradation pathways. In terms of biological role, indispensable for virus replication. Mediates the cap-independent, EIF4E-dependent translation of viral genomic RNAs. Binds to the cap-binding site of host EIF4E and thus interferes with the host EIF4E-dependent mRNA export and translation. VPg-RNA directly binds EIF4E and is a template for transcription. Also forms trimeric complexes with EIF4E-EIF4G, which are templates for translation. Functionally, has RNA-binding and proteolytic activities. Its function is as follows. An RNA-dependent RNA polymerase that plays an essential role in the virus replication. In terms of biological role, involved in aphid transmission, cell-to-cell and systemis movement, encapsidation of the viral RNA and in the regulation of viral RNA amplification. This is Genome polyprotein from Potato virus Y (strain N) (PVY).